We begin with the raw amino-acid sequence, 283 residues long: Ubiquinone biosynthesis protein COQ4, mitochondrial (283 aa).

The N-terminal 25 residues, 1-25, are a transit peptide targeting the mitochondrion; the sequence is MAIAKSVRARAVGLRSLRVLCAQRS. Residues H166, D167, H170, and E182 each coordinate Zn(2+).

The protein belongs to the COQ4 family. In terms of assembly, component of a multi-subunit COQ enzyme complex, composed of at least COQ3, COQ4, COQ5, COQ6, COQ7 and COQ9. Requires Zn(2+) as cofactor.

Its subcellular location is the mitochondrion inner membrane. The enzyme catalyses a 4-hydroxy-3-methoxy-5-(all-trans-polyprenyl)benzoate + H(+) = a 2-methoxy-6-(all-trans-polyprenyl)phenol + CO2. It participates in cofactor biosynthesis; ubiquinone biosynthesis. In terms of biological role, lyase that catalyzes the C1-decarboxylation of 4-hydroxy-3-methoxy-5-(all-trans-polyprenyl)benzoic acid into 2-methoxy-6-(all-trans-polyprenyl)phenol during ubiquinone biosynthesis. The polypeptide is Ubiquinone biosynthesis protein COQ4, mitochondrial (Coccidioides immitis (strain RS) (Valley fever fungus)).